The following is a 176-amino-acid chain: ATP synthase subunit b, chloroplastic (176 aa).

The helical transmembrane segment at 27-49 (ILNLAAVFALLAYVGTDFVSSLL) threads the bilayer.

It belongs to the ATPase B chain family. F-type ATPases have 2 components, F(1) - the catalytic core - and F(0) - the membrane proton channel. F(1) has five subunits: alpha(3), beta(3), gamma(1), delta(1), epsilon(1). F(0) has four main subunits: a(1), b(1), b'(1) and c(10-14). The alpha and beta chains form an alternating ring which encloses part of the gamma chain. F(1) is attached to F(0) by a central stalk formed by the gamma and epsilon chains, while a peripheral stalk is formed by the delta, b and b' chains.

The protein localises to the plastid. It localises to the chloroplast thylakoid membrane. Functionally, f(1)F(0) ATP synthase produces ATP from ADP in the presence of a proton or sodium gradient. F-type ATPases consist of two structural domains, F(1) containing the extramembraneous catalytic core and F(0) containing the membrane proton channel, linked together by a central stalk and a peripheral stalk. During catalysis, ATP synthesis in the catalytic domain of F(1) is coupled via a rotary mechanism of the central stalk subunits to proton translocation. In terms of biological role, component of the F(0) channel, it forms part of the peripheral stalk, linking F(1) to F(0). The polypeptide is ATP synthase subunit b, chloroplastic (Nephroselmis olivacea (Green alga)).